Reading from the N-terminus, the 292-residue chain is Arabinose operon regulatory protein (292 aa).

The alpha-L-arabinopyanose site is built by Pro-8, Thr-24, Arg-38, Tyr-82, and His-93. The HTH araC/xylS-type domain occupies 180 to 279 (REACQYISDH…GASPSEFRAG (100 aa)). 2 consecutive DNA-binding regions (H-T-H motif) follow at residues 198 to 219 (ASVAQHVCLSPSRLSHLFRQQL) and 246 to 269 (IATVGRNVGFDDQLYFSRVFKKCT).

Homodimer.

The protein resides in the cytoplasm. With respect to regulation, arabinose converts the repressor form of AraC to the activator form to regulate the araBAD promoter. In the absence of arabinose, AraC binds to the araO2 and araI1 half-sites in the promoter region of the araBAD operon, leading to the formation of a DNA loop that blocks access of RNA polymerase to the promoter. In the presence of arabinose and the cyclic AMP receptor protein (CRP), it binds to the adjacent half-sites araI1 and araI2, leading to the binding of RNA polymerase to the promoter region and transcription of the araBAD operon. AraI1 acts as a switch mechanism allowing both the repressor and the activator forms of AraC protein to regulate the araBAD promoter. Inhibited by D-fucose, which binds competitively to the same site on the protein. Its function is as follows. Transcription factor that regulates the expression of several genes involved in the transport and metabolism of L-arabinose. Functions both as a positive and a negative regulator. In the presence of arabinose, activates the expression of the araBAD, araE, araFGH and araJ promoters. In the absence of arabinose, negatively regulates the araBAD operon. Represses its own transcription. Acts by binding directly to DNA. The protein is Arabinose operon regulatory protein of Escherichia coli (strain K12).